Here is a 105-residue protein sequence, read N- to C-terminus: Large ribosomal subunit protein uL24 (105 aa).

This sequence belongs to the universal ribosomal protein uL24 family. As to quaternary structure, part of the 50S ribosomal subunit.

Functionally, one of two assembly initiator proteins, it binds directly to the 5'-end of the 23S rRNA, where it nucleates assembly of the 50S subunit. Its function is as follows. One of the proteins that surrounds the polypeptide exit tunnel on the outside of the subunit. The polypeptide is Large ribosomal subunit protein uL24 (Marinomonas sp. (strain MWYL1)).